The sequence spans 183 residues: Large ribosomal subunit protein uL5 (183 aa).

This sequence belongs to the universal ribosomal protein uL5 family. Part of the 50S ribosomal subunit; part of the 5S rRNA/L5/L18/L25 subcomplex. Contacts the 5S rRNA and the P site tRNA. Forms a bridge to the 30S subunit in the 70S ribosome.

Its function is as follows. This is one of the proteins that bind and probably mediate the attachment of the 5S RNA into the large ribosomal subunit, where it forms part of the central protuberance. In the 70S ribosome it contacts protein S13 of the 30S subunit (bridge B1b), connecting the 2 subunits; this bridge is implicated in subunit movement. Contacts the P site tRNA; the 5S rRNA and some of its associated proteins might help stabilize positioning of ribosome-bound tRNAs. In Christiangramia forsetii (strain DSM 17595 / CGMCC 1.15422 / KT0803) (Gramella forsetii), this protein is Large ribosomal subunit protein uL5.